A 463-amino-acid polypeptide reads, in one-letter code: Probable multidrug resistance protein YoeA (463 aa).

The next 12 helical transmembrane spans lie at 24–44 (LFLV…LVGM), 56–76 (VAAV…TIGI), 106–126 (FTFL…LDIL), 143–163 (ARIL…TTFL), 177–197 (IVST…MFGF), 202–222 (IYGS…VLMV), 256–276 (VPAS…ISFV), 293–313 (VASY…IFAA), 330–350 (VGIW…YVFS), 370–390 (LLMI…ISAT), 397–417 (VLWP…PVAF), and 427–447 (ILGV…LIYG).

This sequence belongs to the multi antimicrobial extrusion (MATE) (TC 2.A.66.1) family.

Its subcellular location is the cell membrane. This chain is Probable multidrug resistance protein YoeA (yoeA), found in Bacillus subtilis (strain 168).